The primary structure comprises 406 residues: Tryptophan synthase beta chain (406 aa).

An N6-(pyridoxal phosphate)lysine modification is found at Lys95.

This sequence belongs to the TrpB family. In terms of assembly, tetramer of two alpha and two beta chains. Pyridoxal 5'-phosphate is required as a cofactor.

The catalysed reaction is (1S,2R)-1-C-(indol-3-yl)glycerol 3-phosphate + L-serine = D-glyceraldehyde 3-phosphate + L-tryptophan + H2O. Its pathway is amino-acid biosynthesis; L-tryptophan biosynthesis; L-tryptophan from chorismate: step 5/5. The beta subunit is responsible for the synthesis of L-tryptophan from indole and L-serine. In Pseudomonas fluorescens (strain ATCC BAA-477 / NRRL B-23932 / Pf-5), this protein is Tryptophan synthase beta chain.